A 78-amino-acid polypeptide reads, in one-letter code: Large ribosomal subunit protein bL28 (78 aa).

This sequence belongs to the bacterial ribosomal protein bL28 family.

The polypeptide is Large ribosomal subunit protein bL28 (Thioalkalivibrio sulfidiphilus (strain HL-EbGR7)).